The sequence spans 826 residues: Ribosome-releasing factor 2, mitochondrial (826 aa).

The transit peptide at 1–44 (MIVRNLLGKNRLCCLQPKLLLSTLSQRPQLQLSLQLLCRATRLY) directs the protein to the mitochondrion. Residues 53–340 (PKTRNIGIIA…GITNYLPSPL (288 aa)) form the tr-type G domain. GTP-binding positions include 62–69 (AHIDAGKT), 126–130 (DTPGH), and 180–183 (NKMD).

The protein belongs to the TRAFAC class translation factor GTPase superfamily. Classic translation factor GTPase family. EF-G/EF-2 subfamily.

It localises to the mitochondrion. Mitochondrial GTPase that mediates the disassembly of ribosomes from messenger RNA at the termination of mitochondrial protein biosynthesis. Not involved in the GTP-dependent ribosomal translocation step during translation elongation. The protein is Ribosome-releasing factor 2, mitochondrial of Lodderomyces elongisporus (strain ATCC 11503 / CBS 2605 / JCM 1781 / NBRC 1676 / NRRL YB-4239) (Yeast).